The chain runs to 266 residues: Tryptophan synthase alpha chain (266 aa).

Residues E49 and D60 each act as proton acceptor in the active site.

This sequence belongs to the TrpA family. Tetramer of two alpha and two beta chains.

The catalysed reaction is (1S,2R)-1-C-(indol-3-yl)glycerol 3-phosphate + L-serine = D-glyceraldehyde 3-phosphate + L-tryptophan + H2O. It functions in the pathway amino-acid biosynthesis; L-tryptophan biosynthesis; L-tryptophan from chorismate: step 5/5. In terms of biological role, the alpha subunit is responsible for the aldol cleavage of indoleglycerol phosphate to indole and glyceraldehyde 3-phosphate. In Opitutus terrae (strain DSM 11246 / JCM 15787 / PB90-1), this protein is Tryptophan synthase alpha chain.